The chain runs to 887 residues: Semaphorin-6B (887 aa).

A signal peptide spans M1–G26. Over L27–S605 the chain is Extracellular. Residues P32–V525 form the Sema domain. The N-linked (GlcNAc...) asparagine glycan is linked to N75. Disulfide bonds link C117-C127 and C145-C154. Residues N156, N168, and N292 are each glycosylated (N-linked (GlcNAc...) asparagine). Disulfide bonds link C268–C379 and C293–C338. Residues N387, N442, and N463 are each glycosylated (N-linked (GlcNAc...) asparagine). Cystine bridges form between C487/C519, C528/C546, C534/C580, and C538/C554. A helical membrane pass occupies residues V606–L626. The Cytoplasmic portion of the chain corresponds to R627–P887. 3 disordered regions span residues L656 to G675, H697 to P717, and A759 to P887. Positions T662–P674 are enriched in gly residues. Omega-N-methylarginine is present on R667. Positions L707–P717 are enriched in low complexity.

The protein belongs to the semaphorin family.

Its subcellular location is the cell membrane. Functions as a cell surface repellent for mossy fibers of developing neurons in the hippocampus where it plays a role in axon guidance. May function through the PLXNA4 receptor expressed by mossy cell axons. This chain is Semaphorin-6B (Sema6b), found in Rattus norvegicus (Rat).